A 506-amino-acid polypeptide reads, in one-letter code: Phenylacetaldehyde synthase (506 aa).

3 residues coordinate L-phenylalanine: P101, H202, and H317. K318 carries the N6-(pyridoxal phosphate)lysine modification.

Belongs to the group II decarboxylase family. In terms of assembly, homotetramer. Pyridoxal 5'-phosphate is required as a cofactor. Highly expressed in corolla limbs and at lower levels in corolla tubes and ovaries.

It carries out the reaction L-phenylalanine + O2 + H2O + H(+) = 2-phenylacetaldehyde + H2O2 + NH4(+) + CO2. In terms of biological role, bifunctional enzyme that catalyzes the decarboxylation of L-phenylalanine to 2-phenylethylamine, which is then oxidized to form 2-phenylacetaldehyde, a constituent of floral scent. 2-phenylacetaldehyde is a precursor of 2-phenylethanol, another constituent of floral scent. The protein is Phenylacetaldehyde synthase of Petunia hybrida (Petunia).